The following is a 631-amino-acid chain: Leucine aminopeptidase 2-2 (631 aa).

Substrate contacts are provided by residues 140–142 and 265–270; these read QCQ and PYGGME. His-294 lines the Zn(2+) pocket. Glu-295 acts as the Proton acceptor in catalysis. His-298 and Glu-317 together coordinate Zn(2+). Catalysis depends on Tyr-395, which acts as the Proton donor.

It belongs to the peptidase M1 family. It depends on Zn(2+) as a cofactor.

The protein resides in the cytoplasm. The protein localises to the nucleus. It carries out the reaction an epoxide + H2O = an ethanediol. In terms of biological role, aminopeptidase that preferentially cleaves di- and tripeptides. Also has low epoxide hydrolase activity (in vitro). Can hydrolyze the epoxide leukotriene LTA(4) but it forms preferentially 5,6-dihydroxy-7,9,11,14-eicosatetraenoic acid rather than the cytokine leukotriene B(4) as the product compared to the homologous mammalian enzyme (in vitro). This is Leucine aminopeptidase 2-2 from Meyerozyma guilliermondii (strain ATCC 6260 / CBS 566 / DSM 6381 / JCM 1539 / NBRC 10279 / NRRL Y-324) (Yeast).